The chain runs to 464 residues: Trigger factor (464 aa).

Residues Gly-162–Pro-243 form the PPIase FKBP-type domain. Positions Glu-435 to Lys-464 are disordered.

The protein belongs to the FKBP-type PPIase family. Tig subfamily.

It is found in the cytoplasm. The catalysed reaction is [protein]-peptidylproline (omega=180) = [protein]-peptidylproline (omega=0). In terms of biological role, involved in protein export. Acts as a chaperone by maintaining the newly synthesized protein in an open conformation. Functions as a peptidyl-prolyl cis-trans isomerase. The polypeptide is Trigger factor (Rhodococcus jostii (strain RHA1)).